The chain runs to 860 residues: Ubiquitin carboxyl-terminal hydrolase 13 (860 aa).

Residues 168-276 form a UBP-type; degenerate zinc finger; it reads QVSRHARSLR…EHLLHFGIDM (109 aa). Positions 192, 195, 212, and 225 each coordinate Zn(2+). One can recognise a USP domain in the interval 318-857; the sequence is TGIKNLGNSC…LGYMYFYRRL (540 aa). Cys-327 serves as the catalytic Nucleophile. The interval 611-636 is disordered; it reads DLTPPIVIPEDTRDSSTNNSLESPEI. UBA domains lie at 635 to 676 and 710 to 750; these read EIDE…IIAH and QPPE…IFTH. A compositionally biased stretch (acidic residues) spans 755-768; the sequence is DESEAMSDTADTEP. The disordered stretch occupies residues 755-795; sequence DESEAMSDTADTEPNDNSFSNANAHTDSSLSPDQDLSSPRV. The span at 769-780 shows a compositional bias: polar residues; it reads NDNSFSNANAHT. Over residues 781-793 the composition is skewed to low complexity; that stretch reads DSSLSPDQDLSSP. Catalysis depends on His-819, which acts as the Proton acceptor.

The protein belongs to the peptidase C19 family.

It carries out the reaction Thiol-dependent hydrolysis of ester, thioester, amide, peptide and isopeptide bonds formed by the C-terminal Gly of ubiquitin (a 76-residue protein attached to proteins as an intracellular targeting signal).. Specifically inhibited by spautin-1 (specific and potent autophagy inhibitor-1), a derivative of MBCQ that binds to usp13 and inhibits deubiquitinase activity. In terms of biological role, deubiquitinase that mediates deubiquitination of target proteins and is involved in various processes such as autophagy and endoplasmic reticulum-associated degradation (ERAD). In Danio rerio (Zebrafish), this protein is Ubiquitin carboxyl-terminal hydrolase 13 (usp13).